A 190-amino-acid chain; its full sequence is Elongation factor P (190 aa).

It belongs to the elongation factor P family.

The protein resides in the cytoplasm. It participates in protein biosynthesis; polypeptide chain elongation. Involved in peptide bond synthesis. Stimulates efficient translation and peptide-bond synthesis on native or reconstituted 70S ribosomes in vitro. Probably functions indirectly by altering the affinity of the ribosome for aminoacyl-tRNA, thus increasing their reactivity as acceptors for peptidyl transferase. The protein is Elongation factor P of Bartonella bacilliformis (strain ATCC 35685 / KC583 / Herrer 020/F12,63).